Consider the following 519-residue polypeptide: Cell division cycle protein 20 homolog B (519 aa).

Positions 77-106 (WQLSPARDPESSSSVEEGPPSHTPESLASG) are disordered. Residues 87–96 (SSSSVEEGPP) show a composition bias toward low complexity. 6 WD repeats span residues 229–266 (RNDY…WIEN), 271–310 (VCCH…QLRN), 353–392 (YHKE…GVQG), 399–441 (PQST…NIQT), 443–484 (STQS…RSGG), and 487–519 (GHRD…WKCC).

The protein belongs to the WD repeat CDC20/Fizzy family. In terms of tissue distribution, expressed in multiciliated cells (MCCs).

Its subcellular location is the cytoplasm. Protein regulator of centriole-deuterosome disengagement and subsequently participates in the ciliogenesis in multiciliated cells (MCCs). The sequence is that of Cell division cycle protein 20 homolog B from Mus musculus (Mouse).